The chain runs to 299 residues: Protein charybde (299 aa).

The disordered stretch occupies residues 73–103 (LNTRPSATPPSAGGGGPLAGGGSVGMTTPKQ). The span at 84-96 (AGGGGPLAGGGSV) shows a compositional bias: gly residues.

It belongs to the DDIT4 family.

Its subcellular location is the cytoplasm. In terms of biological role, inhibits cell growth by regulating the Tor pathway upstream of the Tsc1-Tsc2 complex and downstream of Akt1. Acts as a cell death activator during head development. The polypeptide is Protein charybde (chrb) (Drosophila melanogaster (Fruit fly)).